A 290-amino-acid polypeptide reads, in one-letter code: Eukaryotic translation initiation factor 3 subunit G (290 aa).

Disordered stretches follow at residues 1-35 and 157-200; these read MSRL…DGTK and ESTG…GERM. The region spanning 210–288 is the RRM domain; it reads ATLRVTNVSE…LILRVEFAKR (79 aa).

This sequence belongs to the eIF-3 subunit G family. As to quaternary structure, component of the eukaryotic translation initiation factor 3 (eIF-3) complex.

The protein localises to the cytoplasm. Its function is as follows. RNA-binding component of the eukaryotic translation initiation factor 3 (eIF-3) complex, which is involved in protein synthesis of a specialized repertoire of mRNAs and, together with other initiation factors, stimulates binding of mRNA and methionyl-tRNAi to the 40S ribosome. The eIF-3 complex specifically targets and initiates translation of a subset of mRNAs involved in cell proliferation. This subunit can bind 18S rRNA. This Aspergillus clavatus (strain ATCC 1007 / CBS 513.65 / DSM 816 / NCTC 3887 / NRRL 1 / QM 1276 / 107) protein is Eukaryotic translation initiation factor 3 subunit G (tif35).